Reading from the N-terminus, the 357-residue chain is Alanine racemase (357 aa).

Lys-33 serves as the catalytic Proton acceptor; specific for D-alanine. An N6-(pyridoxal phosphate)lysine modification is found at Lys-33. Substrate is bound at residue Arg-129. The active-site Proton acceptor; specific for L-alanine is the Tyr-253. Position 301 (Met-301) interacts with substrate.

Belongs to the alanine racemase family. Pyridoxal 5'-phosphate is required as a cofactor.

The catalysed reaction is L-alanine = D-alanine. Its pathway is amino-acid biosynthesis; D-alanine biosynthesis; D-alanine from L-alanine: step 1/1. Its function is as follows. Catalyzes the interconversion of L-alanine and D-alanine. May also act on other amino acids. This Pseudomonas savastanoi pv. phaseolicola (strain 1448A / Race 6) (Pseudomonas syringae pv. phaseolicola (strain 1448A / Race 6)) protein is Alanine racemase (alr).